The primary structure comprises 147 residues: MKLHEIAPQPGSTKRRRRVGRGVSAGQGASCGLGMRGQKSRSGTGTRPGFEGGQMPLYRRVPKLKHFPLVNPRQYTIVNLRKLASLPANTEVTLESLLKAKILTSNDGPLKVLGDGEITVPLKVKAAAFSNSAKEKITAAQGTWEEI.

Residues 1 to 55 form a disordered region; it reads MKLHEIAPQPGSTKRRRRVGRGVSAGQGASCGLGMRGQKSRSGTGTRPGFEGGQM. Residues 23-35 show a composition bias toward gly residues; that stretch reads VSAGQGASCGLGM.

The protein belongs to the universal ribosomal protein uL15 family. Part of the 50S ribosomal subunit.

Functionally, binds to the 23S rRNA. This chain is Large ribosomal subunit protein uL15, found in Microcystis aeruginosa (strain NIES-843 / IAM M-2473).